Reading from the N-terminus, the 434-residue chain is Gamma-enolase (434 aa).

Position 2 is an N-acetylserine (Ser-2). An N6-acetyllysine modification is found at Lys-5. Position 26 is a phosphothreonine (Thr-26). A Mg(2+)-binding site is contributed by Ser-40. Tyr-44 carries the post-translational modification Phosphotyrosine. Position 60 is an N6-acetyllysine; alternate (Lys-60). Residue Lys-60 is modified to N6-succinyllysine; alternate. The residue at position 64 (Lys-64) is an N6-acetyllysine. N6-acetyllysine; alternate is present on Lys-89. Lys-89 carries the post-translational modification N6-succinyllysine; alternate. Positions 158 and 167 each coordinate substrate. 3 positions are modified to N6-acetyllysine: Lys-193, Lys-197, and Lys-199. N6-acetyllysine; alternate is present on Lys-202. Lys-202 is covalently cross-linked (Glycyl lysine isopeptide (Lys-Gly) (interchain with G-Cter in SUMO2); alternate). Glu-210 functions as the Proton donor in the catalytic mechanism. N6-acetyllysine; alternate occurs at positions 228 and 233. Lys-228 is subject to N6-succinyllysine; alternate. Residue Lys-233 is modified to N6-(2-hydroxyisobutyryl)lysine; alternate. Asp-245 is a binding site for Mg(2+). Lys-256 bears the N6-acetyllysine mark. Residue Ser-263 is modified to Phosphoserine. Tyr-287 carries the phosphotyrosine modification. Ser-291 carries the phosphoserine modification. Residues Glu-293 and Asp-318 each coordinate Mg(2+). Residues Glu-293 and Asp-318 each coordinate substrate. N6-acetyllysine is present on residues Lys-335 and Lys-343. The Proton acceptor role is filled by Lys-343. Residues 370–373 (SHRS) and Lys-394 each bind substrate. At Lys-406 the chain carries N6-acetyllysine.

The protein belongs to the enolase family. As to quaternary structure, mammalian enolase is composed of 3 isozyme subunits, alpha, beta and gamma, which can form homodimers or heterodimers which are cell-type and development-specific. Mg(2+) serves as cofactor. In terms of tissue distribution, skeletal muscle (at protein level). The alpha/alpha homodimer is expressed in embryo and in most adult tissues. The alpha/beta heterodimer and the beta/beta homodimer are found in striated muscle, and the alpha/gamma heterodimer and the gamma/gamma homodimer in neurons.

It is found in the cytoplasm. The protein localises to the cell membrane. The enzyme catalyses (2R)-2-phosphoglycerate = phosphoenolpyruvate + H2O. It functions in the pathway carbohydrate degradation; glycolysis; pyruvate from D-glyceraldehyde 3-phosphate: step 4/5. Has neurotrophic and neuroprotective properties on a broad spectrum of central nervous system (CNS) neurons. Binds, in a calcium-dependent manner, to cultured neocortical neurons and promotes cell survival. The chain is Gamma-enolase (Eno2) from Mus musculus (Mouse).